The chain runs to 440 residues: FAD-dependent monooxygenase afoD (440 aa).

Residues 10 to 30 (PLSIAIIGGGIIGLMTALGLL) form a helical membrane-spanning segment. The FAD site is built by Glu-41, Leu-145, and Asp-320. Asn-352 carries N-linked (GlcNAc...) asparagine glycosylation.

This sequence belongs to the paxM FAD-dependent monooxygenase family. FAD serves as cofactor.

The protein resides in the membrane. Functionally, FAD-dependent monooxygenase; part of the gene cluster that mediates the biosynthesis of asperfuranone, a probable antitumor agent. The polyketide synthase afoG is responsible for producing the 3,5-dimethyloctadienone moiety from acetyl-CoA, three malonyl-CoA, and two S-adenosyl methionines (SAM). The 3,5-dimethyloctadienone moiety is then loaded onto the SAT domain of afoE and extended with four malonyl-CoA and one SAM, which leads to the formation of 2,4-dihydroxy-6-(5,7-dimethyl-2-oxo-trans-3-trans-5-nonadienyl)-3-methylbenzaldehyde (compound 2) after reductive release and aldol condensation. AfoD is the next enzyme in the biosynthesis sequence and hydroxylates the side chain at the benzylic position of compound 2. After benzylic hydroxylation, a furan ring is formed after five-member ring hemiacetal formation and water elimination. AfoF and afoC are proposed to oxidize the R-diketone proton and to reduce the unconjugated carbonyl group, respectively, to generate asperfuranone. Since no intermediates could be isolated from afoF and afoC deletants, the sequence of these two enzymes is not fully understood. Moreover, since afoC deletant still produces a small amount of asperfuranone, other endogenous oxidoreductases might catalyze the same reaction with much less efficiency. The sequence is that of FAD-dependent monooxygenase afoD from Emericella nidulans (strain FGSC A4 / ATCC 38163 / CBS 112.46 / NRRL 194 / M139) (Aspergillus nidulans).